The sequence spans 835 residues: MGNYKSRPTQTCTDEWKKKVSESYVITIERLEDDLQIKEKELTELRNIFGSDEAFSKVNLNYRTENGLSLLHLCCICGGKKSHIRTLMLKGLRPSRLTRNGFTALHLAVYKDNAELITSLLHSGADIQQVGYGGLTALHIATIAGHLEAADVLLQHGANVNIQDAVFFTPLHIAAYYGHEQVTRLLLKFGADVNVSGEVGDRPLHLASAKGFLNIAKLLMEEGSKADVNAQDNEDHVPLHFCSRFGHHDIVKYLLQSDLEVQPHVVNIYGDTPLHLACYNGKFEVAKEIIQISGTESLTKENIFSETAFHSACTYGKSIDLVKFLLDQNVININHQGRDGHTGLHSACYHGHIRLVQFLLDNGADMNLVACDPSRSSGEKDEQTCLMWAYEKGHDAIVTLLKHYKRPQDELPCNEYSQPGGDGSYVSVPSPLGKIKSMTKEKADILLLRAGLPSHFHLQLSEIEFHEIIGSGSFGKVYKGRCRNKIVAIKRYRANTYCSKSDVDMFCREVSILCQLNHPCVIQFVGACLNDPSQFAIVTQYISGGSLFSLLHEQKRILDLQSKLIIAVDVAKGMEYLHNLTQPIIHRDLNSHNILLYEDGHAVVADFGESRFLQSLDEDNMTKQPGNLRWMAPEVFTQCTRYTIKADVFSYALCLWEILTGEIPFAHLKPAAAAADMAYHHIRPPIGYSIPKPISSLLIRGWNACPEGRPEFSEVVMKLEECLCNIELMSPASSNSSGSLSPSSSSDCLVNRGGPGRSHVAALRSRFELEYALNARSYAALSQSAGQYSSQGLSLEEMKRSLQYTPIDKYGYVSDPMSSMHFHSCRNSSSFEDSS.

Residues 21 to 51 adopt a coiled-coil conformation; that stretch reads SESYVITIERLEDDLQIKEKELTELRNIFGS. ANK repeat units follow at residues 66 to 96, 100 to 129, 133 to 162, 166 to 195, 199 to 228, 234 to 263, 269 to 298, 304 to 335, 339 to 368, and 381 to 410; these read NGLSLLHLCCICGGKKSHIRTLMLKGLRPSR, NGFTALHLAVYKDNAELITSLLHSGADIQQ, GGLTALHIATIAGHLEAADVLLQHGANVNI, VFFTPLHIAAYYGHEQVTRLLLKFGADVNV, VGDRPLHLASAKGFLNIAKLLMEEGSKADV, EDHVPLHFCSRFGHHDIVKYLLQSDLEVQP, YGDTPLHLACYNGKFEVAKEIIQISGTESL, FSETAFHSACTYGKSIDLVKFLLDQNVININH, DGHTGLHSACYHGHIRLVQFLLDNGADMNL, and DEQTCLMWAYEKGHDAIVTLLKHYKRPQDE. Residues 463–723 form the Protein kinase domain; that stretch reads IEFHEIIGSG…EVVMKLEECL (261 aa). ATP contacts are provided by residues 469-477 and lysine 490; that span reads IGSGSFGKV. Aspartate 588 functions as the Proton acceptor in the catalytic mechanism. Positions 732–746 are enriched in low complexity; that stretch reads ASSNSSGSLSPSSSS. Residues 732–751 are disordered; it reads ASSNSSGSLSPSSSSDCLVN.

It belongs to the protein kinase superfamily. TKL Ser/Thr protein kinase family. MAP kinase kinase kinase subfamily. As to quaternary structure, interacts with TNNI3, ACTC1, ACTA1, MYBPC3, AIP, FABP3 and HADHB. Requires Mg(2+) as cofactor. Post-translationally, autophosphorylated. As to expression, highly expressed in both adult and fetal heart.

It localises to the nucleus. The protein resides in the cytoplasm. It carries out the reaction L-seryl-[protein] + ATP = O-phospho-L-seryl-[protein] + ADP + H(+). It catalyses the reaction L-threonyl-[protein] + ATP = O-phospho-L-threonyl-[protein] + ADP + H(+). Its function is as follows. May play a role in cardiac physiology. This chain is Serine/threonine-protein kinase TNNI3K, found in Homo sapiens (Human).